A 503-amino-acid chain; its full sequence is Maturase K (503 aa).

Belongs to the intron maturase 2 family. MatK subfamily.

The protein localises to the plastid. The protein resides in the chloroplast. Usually encoded in the trnK tRNA gene intron. Probably assists in splicing its own and other chloroplast group II introns. The sequence is that of Maturase K from Liquidambar formosana (Formosan gum).